We begin with the raw amino-acid sequence, 345 residues long: UDP-3-O-acylglucosamine N-acyltransferase (345 aa).

His-248 (proton acceptor) is an active-site residue.

This sequence belongs to the transferase hexapeptide repeat family. LpxD subfamily. As to quaternary structure, homotrimer.

The catalysed reaction is a UDP-3-O-[(3R)-3-hydroxyacyl]-alpha-D-glucosamine + a (3R)-hydroxyacyl-[ACP] = a UDP-2-N,3-O-bis[(3R)-3-hydroxyacyl]-alpha-D-glucosamine + holo-[ACP] + H(+). It functions in the pathway bacterial outer membrane biogenesis; LPS lipid A biosynthesis. In terms of biological role, catalyzes the N-acylation of UDP-3-O-acylglucosamine using 3-hydroxyacyl-ACP as the acyl donor. Is involved in the biosynthesis of lipid A, a phosphorylated glycolipid that anchors the lipopolysaccharide to the outer membrane of the cell. This chain is UDP-3-O-acylglucosamine N-acyltransferase, found in Prochlorococcus marinus (strain SARG / CCMP1375 / SS120).